Consider the following 184-residue polypeptide: Elongation factor P (184 aa).

The protein belongs to the elongation factor P family.

The protein localises to the cytoplasm. It functions in the pathway protein biosynthesis; polypeptide chain elongation. In terms of biological role, involved in peptide bond synthesis. Stimulates efficient translation and peptide-bond synthesis on native or reconstituted 70S ribosomes in vitro. Probably functions indirectly by altering the affinity of the ribosome for aminoacyl-tRNA, thus increasing their reactivity as acceptors for peptidyl transferase. The sequence is that of Elongation factor P from Paracidovorax citrulli (strain AAC00-1) (Acidovorax citrulli).